A 467-amino-acid chain; its full sequence is Glutamate--tRNA ligase (467 aa).

The 'HIGH' region motif lies at Pro-9–Gly-19. The short motif at Lys-237–Arg-241 is the 'KMSKS' region element. Lys-240 contacts ATP.

Belongs to the class-I aminoacyl-tRNA synthetase family. Glutamate--tRNA ligase type 1 subfamily. As to quaternary structure, monomer.

Its subcellular location is the cytoplasm. The catalysed reaction is tRNA(Glu) + L-glutamate + ATP = L-glutamyl-tRNA(Glu) + AMP + diphosphate. In terms of biological role, catalyzes the attachment of glutamate to tRNA(Glu) in a two-step reaction: glutamate is first activated by ATP to form Glu-AMP and then transferred to the acceptor end of tRNA(Glu). This is Glutamate--tRNA ligase from Xylella fastidiosa (strain M12).